Here is a 96-residue protein sequence, read N- to C-terminus: Pyrimidine/purine nucleoside phosphorylase (96 aa).

This sequence belongs to the nucleoside phosphorylase PpnP family.

The enzyme catalyses a purine D-ribonucleoside + phosphate = a purine nucleobase + alpha-D-ribose 1-phosphate. The catalysed reaction is adenosine + phosphate = alpha-D-ribose 1-phosphate + adenine. It carries out the reaction cytidine + phosphate = cytosine + alpha-D-ribose 1-phosphate. It catalyses the reaction guanosine + phosphate = alpha-D-ribose 1-phosphate + guanine. The enzyme catalyses inosine + phosphate = alpha-D-ribose 1-phosphate + hypoxanthine. The catalysed reaction is thymidine + phosphate = 2-deoxy-alpha-D-ribose 1-phosphate + thymine. It carries out the reaction uridine + phosphate = alpha-D-ribose 1-phosphate + uracil. It catalyses the reaction xanthosine + phosphate = alpha-D-ribose 1-phosphate + xanthine. Catalyzes the phosphorolysis of diverse nucleosides, yielding D-ribose 1-phosphate and the respective free bases. Can use uridine, adenosine, guanosine, cytidine, thymidine, inosine and xanthosine as substrates. Also catalyzes the reverse reactions. The polypeptide is Pyrimidine/purine nucleoside phosphorylase (Erwinia tasmaniensis (strain DSM 17950 / CFBP 7177 / CIP 109463 / NCPPB 4357 / Et1/99)).